Consider the following 374-residue polypeptide: uncharacterized protein (374 aa).

This sequence belongs to the mimivirus L41 family.

This is an uncharacterized protein from Acanthamoeba polyphaga (Amoeba).